The sequence spans 95 residues: Aspartyl/glutamyl-tRNA(Asn/Gln) amidotransferase subunit C (95 aa).

Belongs to the GatC family. As to quaternary structure, heterotrimer of A, B and C subunits.

The enzyme catalyses L-glutamyl-tRNA(Gln) + L-glutamine + ATP + H2O = L-glutaminyl-tRNA(Gln) + L-glutamate + ADP + phosphate + H(+). It catalyses the reaction L-aspartyl-tRNA(Asn) + L-glutamine + ATP + H2O = L-asparaginyl-tRNA(Asn) + L-glutamate + ADP + phosphate + 2 H(+). Allows the formation of correctly charged Asn-tRNA(Asn) or Gln-tRNA(Gln) through the transamidation of misacylated Asp-tRNA(Asn) or Glu-tRNA(Gln) in organisms which lack either or both of asparaginyl-tRNA or glutaminyl-tRNA synthetases. The reaction takes place in the presence of glutamine and ATP through an activated phospho-Asp-tRNA(Asn) or phospho-Glu-tRNA(Gln). This Methylorubrum extorquens (strain CM4 / NCIMB 13688) (Methylobacterium extorquens) protein is Aspartyl/glutamyl-tRNA(Asn/Gln) amidotransferase subunit C.